A 492-amino-acid chain; its full sequence is Probable small intestine urate exporter (492 aa).

The interval 1-20 (MSTGADLKAREGDIPSDNMT) is disordered. N-linked (GlcNAc...) asparagine glycosylation is found at N18, N44, N53, N63, N72, and N87. 11 consecutive transmembrane segments (helical) span residues 112–132 (LSYGSFIAPIPTGYVAGVFGA), 134–154 (YVVGLGLLISSVLTLFIPLAA), 156–176 (AGVALLIVLRVIQGMAQVMVL), 198–218 (IAASGSMLGTFLVLIAGGLIC), 225–245 (YIFYIFGGIGCACCLLWFPLV), 287–307 (LPLWAIVVSYFCEYWLLSTVM), 327–347 (ILSALPFMFGCVCIILGGLLA), 363–383 (KLFTAVGVLASSGILLPLPWV), 393–413 (FLVLSSVFASLCDSGALINFL), 426–446 (LLQVFSYLAGGIAPTVAGFFI), and 456–476 (NVFFLAAAIDVVGLLFYLIFS).

The protein belongs to the major facilitator superfamily. Sodium/anion cotransporter family. Expressed in the small intestine (at protein level).

It localises to the apical cell membrane. The catalysed reaction is 3 Na(+)(out) + phosphate(out) = 3 Na(+)(in) + phosphate(in). It carries out the reaction urate(out) + n chloride(in) = urate(in) + n chloride(out). The enzyme catalyses L-thyroxine(out) = L-thyroxine(in). It catalyses the reaction 3,3',5-triiodo-L-thyronine(out) = 3,3',5-triiodo-L-thyronine(in). Acts as a membrane potential-dependent organic anion transporter, the transport requires a low concentration of chloride ions. Mediates chloride-dependent transport of urate. Mediates sodium-independent high affinity transport of thyroid hormones including L-thyroxine (T4) and 3,3',5-triiodo-L-thyronine (T3). Can actively transport inorganic phosphate into cells via Na(+) cotransport. The chain is Probable small intestine urate exporter (Slc17a4) from Mus musculus (Mouse).